The primary structure comprises 498 residues: Glycerol kinase (498 aa).

T12 contacts ADP. ATP-binding residues include T12, T13, and S14. T12 is a sn-glycerol 3-phosphate binding site. R16 lines the ADP pocket. The sn-glycerol 3-phosphate site is built by R82, E83, Y134, and D244. R82, E83, Y134, D244, and Q245 together coordinate glycerol. 2 residues coordinate ADP: T266 and G310. Residues T266, G310, Q314, and G411 each coordinate ATP. 2 residues coordinate ADP: G411 and N415.

Belongs to the FGGY kinase family.

It carries out the reaction glycerol + ATP = sn-glycerol 3-phosphate + ADP + H(+). Its pathway is polyol metabolism; glycerol degradation via glycerol kinase pathway; sn-glycerol 3-phosphate from glycerol: step 1/1. Inhibited by fructose 1,6-bisphosphate (FBP). Key enzyme in the regulation of glycerol uptake and metabolism. Catalyzes the phosphorylation of glycerol to yield sn-glycerol 3-phosphate. The protein is Glycerol kinase of Chloroflexus aurantiacus (strain ATCC 29366 / DSM 635 / J-10-fl).